The sequence spans 362 residues: Cobalt-precorrin-5B C(1)-methyltransferase (362 aa).

Belongs to the CbiD family.

The catalysed reaction is Co-precorrin-5B + S-adenosyl-L-methionine = Co-precorrin-6A + S-adenosyl-L-homocysteine. It functions in the pathway cofactor biosynthesis; adenosylcobalamin biosynthesis; cob(II)yrinate a,c-diamide from sirohydrochlorin (anaerobic route): step 6/10. Its function is as follows. Catalyzes the methylation of C-1 in cobalt-precorrin-5B to form cobalt-precorrin-6A. This chain is Cobalt-precorrin-5B C(1)-methyltransferase, found in Burkholderia orbicola (strain MC0-3).